We begin with the raw amino-acid sequence, 185 residues long: MAAVIAKSSVSAAVARPARSSVRPMAALKPAVKAAPVAAPAQANQMMVWTPVNNKMFETFSYLPPLSDEQIAAQVDYIVANGWIPCLEFAESDKAYVSNESAIRFGSVSCLYYDNRYWTMWKLPMFGCRDPMQVLREIVACTKAFPDAYVRLVAFDNQKQVQIMGFLVQRPKSARDWQPANKRSV.

A chloroplast-targeting transit peptide spans 1–45; that stretch reads MAAVIAKSSVSAAVARPARSSVRPMAALKPAVKAAPVAAPAQANQ. M46 carries the N-methylmethionine modification.

The protein belongs to the RuBisCO small chain family. As to quaternary structure, heterohexadecamer of 8 large and 8 small subunits.

It localises to the plastid. The protein resides in the chloroplast. Its subcellular location is the chloroplast stroma. Its function is as follows. RuBisCO catalyzes two reactions: the carboxylation of D-ribulose 1,5-bisphosphate, the primary event in carbon dioxide fixation, as well as the oxidative fragmentation of the pentose substrate. Both reactions occur simultaneously and in competition at the same active site. Although the small subunit is not catalytic it is essential for maximal activity. The protein is Ribulose bisphosphate carboxylase small subunit, chloroplastic 2 of Chlamydomonas reinhardtii (Chlamydomonas smithii).